A 642-amino-acid polypeptide reads, in one-letter code: Ribosome biogenesis protein BOP1 homolog (642 aa).

The interval 1–28 is disordered; the sequence is MIHKRMNSTELERTSKKIDDYDSSDEED. A compositionally biased stretch (basic and acidic residues) spans 10-20; the sequence is ELERTSKKIDD. 6 WD repeats span residues 311–351, 353–393, 472–510, 513–552, 556–595, and 612–642; these read GHSG…CLKT, SLDG…DRHR, RLKG…LKKK, TGSQ…KPWK, HHTA…DSLK, and KNGL…ALFT.

It belongs to the WD repeat BOP1/ERB1 family.

The protein localises to the nucleus. Its subcellular location is the nucleolus. It localises to the nucleoplasm. Its function is as follows. Required for maturation of ribosomal RNAs and formation of the large ribosomal subunit. In Brugia malayi (Filarial nematode worm), this protein is Ribosome biogenesis protein BOP1 homolog.